A 200-amino-acid chain; its full sequence is Holliday junction branch migration complex subunit RuvA (200 aa).

Positions 1 to 63 (MIASVRGVVT…EDSLTLYGFA (63 aa)) are domain I. The tract at residues 64-142 (DDNAKALFEL…PVPVGGDGAA (79 aa)) is domain II. Residues 143–151 (GVTTGAWPE) form a flexible linker region. The interval 151 to 200 (EQVRQALVGLGWTAGQAEQAVAAVAETVDGEVPPVPVLLRQAIRLLGRTR) is domain III.

Belongs to the RuvA family. As to quaternary structure, homotetramer. Forms an RuvA(8)-RuvB(12)-Holliday junction (HJ) complex. HJ DNA is sandwiched between 2 RuvA tetramers; dsDNA enters through RuvA and exits via RuvB. An RuvB hexamer assembles on each DNA strand where it exits the tetramer. Each RuvB hexamer is contacted by two RuvA subunits (via domain III) on 2 adjacent RuvB subunits; this complex drives branch migration. In the full resolvosome a probable DNA-RuvA(4)-RuvB(12)-RuvC(2) complex forms which resolves the HJ.

Its subcellular location is the cytoplasm. In terms of biological role, the RuvA-RuvB-RuvC complex processes Holliday junction (HJ) DNA during genetic recombination and DNA repair, while the RuvA-RuvB complex plays an important role in the rescue of blocked DNA replication forks via replication fork reversal (RFR). RuvA specifically binds to HJ cruciform DNA, conferring on it an open structure. The RuvB hexamer acts as an ATP-dependent pump, pulling dsDNA into and through the RuvAB complex. HJ branch migration allows RuvC to scan DNA until it finds its consensus sequence, where it cleaves and resolves the cruciform DNA. The chain is Holliday junction branch migration complex subunit RuvA from Salinispora arenicola (strain CNS-205).